A 145-amino-acid polypeptide reads, in one-letter code: Pleckstrin homology domain-containing protein 1 (145 aa).

In terms of domain architecture, PH spans 26–127 (NPERSGWLTK…WINSIGRSIV (102 aa)). Positions 29-53 (RSGWLTKQGDYIKTWRRRWFVLKRG) are binds specifically PtdIns3P.

As to quaternary structure, binds PtdIns3P. As to expression, ubiquitously expressed.

The protein localises to the cytoplasm. Functionally, binds specifically to phosphatidylinositol 3-phosphate (PtdIns3P), but not to other phosphoinositides. The chain is Pleckstrin homology domain-containing protein 1 (PH1) from Arabidopsis thaliana (Mouse-ear cress).